Consider the following 529-residue polypeptide: V-set and immunoglobulin domain-containing protein 10 (529 aa).

An N-terminal signal peptide occupies residues 1 to 18 (MMITSAVVLYLLLLSHQT). Ig-like C2-type domains are found at residues 19–110 (VSEE…QTLS) and 129–217 (PATF…QELL). The Extracellular portion of the chain corresponds to 21 to 411 (EEQVQQFVIG…LNVKTSAGNG (391 aa)). 13 N-linked (GlcNAc...) asparagine glycosylation sites follow: Asn34, Asn35, Asn46, Asn135, Asn147, Asn159, Asn211, Asn269, Asn280, Asn284, Asn330, Asn357, and Asn376. An intrachain disulfide couples Cys40 to Cys96. Cys150 and Cys199 are oxidised to a cystine. Residues 317–403 (PTGQPLATAL…GARELEVYLN (87 aa)) enclose the Ig-like C2-type 3 domain. Cys335 and Cys387 form a disulfide bridge. A helical membrane pass occupies residues 412-432 (GAIVGIFVSVLVMMIGIVVGV). Topologically, residues 433–529 (TVYTKRDRIC…PQRAELQPAV (97 aa)) are cytoplasmic.

It is found in the membrane. This is V-set and immunoglobulin domain-containing protein 10 (vsig10) from Danio rerio (Zebrafish).